The primary structure comprises 545 residues: Phenylalanine--tRNA ligase beta subunit (545 aa).

Positions 268-343 constitute a B5 domain; sequence FLHKIQNVRE…MSIGYNNLEP (76 aa). Positions 321, 327, 330, and 331 each coordinate Mg(2+).

This sequence belongs to the phenylalanyl-tRNA synthetase beta subunit family. Type 2 subfamily. Tetramer of two alpha and two beta subunits. It depends on Mg(2+) as a cofactor.

The protein localises to the cytoplasm. It carries out the reaction tRNA(Phe) + L-phenylalanine + ATP = L-phenylalanyl-tRNA(Phe) + AMP + diphosphate + H(+). The polypeptide is Phenylalanine--tRNA ligase beta subunit (Saccharolobus islandicus (strain Y.N.15.51 / Yellowstone #2) (Sulfolobus islandicus)).